The primary structure comprises 131 residues: MTTSSYFLLVALGLLLYLCQSSFGTEHTCEPGASPHPQGKCRPELAEFHETMCEVEESLQGGTDDARKKRGRASLLRKRRGFLSMLKARAKRNEASPLPRAGRGIVCECCKNSCTYEEITEYCPPVTEGSG.

The signal sequence occupies residues 1 to 24 (MTTSSYFLLVALGLLLYLCQSSFG). 4 disulfides stabilise this stretch: Cys-29–Cys-107, Cys-41–Cys-110, Cys-53–Cys-123, and Cys-109–Cys-114. A propeptide spans 59–92 (LQGGTDDARKKRGRASLLRKRRGFLSMLKARAKR) (c peptide). Glu-118 carries the post-translational modification 4-carboxyglutamate; partial. Ser-130 carries the serine amide modification.

Belongs to the insulin family. In terms of assembly, heterodimer of A and B chains; disulfide-linked. As to expression, expressed by the venom gland.

It is found in the secreted. In terms of biological role, this venom insulin facilitates prey capture by rapidly inducing hypoglycemic shock. Intraperitoneal injection of this peptide into zebrafish lowers blood glucose with the same potency than human insulin. In vivo, when applied to water, this peptide reduces overall locomotor activity of zebrafish larvae, observed as a significant decrease in the percentage of time spent swimming and movement frequency. This Conus quercinus (Oak cone) protein is Con-Ins Q1.